Reading from the N-terminus, the 246-residue chain is Probable transcriptional regulatory protein CLD_1467 (246 aa).

This sequence belongs to the TACO1 family.

Its subcellular location is the cytoplasm. The chain is Probable transcriptional regulatory protein CLD_1467 from Clostridium botulinum (strain Okra / Type B1).